Reading from the N-terminus, the 212-residue chain is Regulator of G-protein signaling 2 (212 aa).

2 disordered regions span residues 11–33 and 48–69; these read HDCG…REKM and FLQN…PQTF. The tract at residues 32 to 66 is necessary for membrane association; sequence KMKRTLLKDWKTRLSYFLQNSSSPGKPKTGKKSKP. Residues 79–116 are necessary to inhibit protein synthesis; it reads LWAEAFDELLASKYGLAAFRAFLKSEFCEENIEFWLAC. The region spanning 83–199 is the RGS domain; it reads AFDELLASKY…LESEFYQDLC (117 aa).

Interacts with GNAQ. Does not interact with GNAI1 and GNAI3. Interacts with EIF2B5. Interacts with PRKG1 (isoform alpha). Phosphorylated by protein kinase C. Phosphorylation by PRKG1 leads to activation of RGS2 activity.

The protein resides in the cell membrane. Its subcellular location is the cytoplasm. It is found in the nucleus. It localises to the nucleolus. Regulates G protein-coupled receptor signaling cascades. Inhibits signal transduction by increasing the GTPase activity of G protein alpha subunits, thereby driving them into their inactive GDP-bound form. It is involved in the negative regulation of the angiotensin-activated signaling pathway. Plays a role in the regulation of blood pressure in response to signaling via G protein-coupled receptors and GNAQ. Plays a role in regulating the constriction and relaxation of vascular smooth muscle. Binds EIF2B5 and blocks its activity, thereby inhibiting the translation of mRNA into protein. The sequence is that of Regulator of G-protein signaling 2 (RGS2) from Sus scrofa (Pig).